A 144-amino-acid polypeptide reads, in one-letter code: Protein NrdI (144 aa).

The protein belongs to the NrdI family.

Functionally, probably involved in ribonucleotide reductase function. The polypeptide is Protein NrdI (Streptococcus pyogenes serotype M4 (strain MGAS10750)).